Reading from the N-terminus, the 309-residue chain is Probable RuBisCO transcriptional regulator (309 aa).

An HTH lysR-type domain is found at 6–63 (FTLDQLRILKAIVKEGSFKRAADSLYVSQPAISLQIQNLEKQLNIPLFERSNKKATLT). The H-T-H motif DNA-binding region spans 23 to 42 (FKRAADSLYVSQPAISLQIQ).

The protein belongs to the LysR transcriptional regulatory family.

The protein localises to the plastid. It is found in the chloroplast. Functionally, trans-acting transcriptional regulator of RuBisCO genes (rbcL and rbcS) expression. In Gracilaria tenuistipitata var. liui (Red alga), this protein is Probable RuBisCO transcriptional regulator (rbcR).